Reading from the N-terminus, the 769-residue chain is MDIGKKHVIPKSQYRRKRREFFHNEDREENLNQHQDKQNIDNTTSKKADKQIHKDSIDKHERFKNSLSSHLEQRNRDVNENKAEESKSNQDSKSAYNRDHYLTDDVSKKQNSLDSVDQDTEKSKYYEQNSEATLSTKSTDKVESTEMRKLSSDKNKVGHEEQHVLSKPSEHDKETRIDSESSRTDSDSSMQTEKIKKDSSDGNKSSNLKSEVISDKSNTVPKLSESDDEVNNQKPLTLPEEQKLKRQQSQNEQTKTYTYGDSEQNDKSNHENDLSHHIPSISDDKDNVMRENHIVDDNPDNDINTPSLSKTDDDRKLDEKIHVEDKHKQNADSSETVGYQSQSTASHRSTEKRNISINDHDKLNGQKTNTKTSANNNQKKATSKLNKGRATNNNYSDILKKFWMMYWPKLVILMGIIILIVILNAIFNNVNKNDRMNDNNDADAQKYTTTMKNANNTVKSVVTVENETSKDSSLPKDKASQDEVGSGVVYKKSGDTLYIVTNAHVVGDKENQKITFSNNKSVVGKVLGKDKWSDLAVVKATSSDSSVKEIAIGDSNNLVLGEPILVVGNPLGVDFKGTVTEGIISGLNRNVPIDFDKDNKYDMLMKAFQIDASVNPGNSGGAVVNREGKLIGVVAAKISMPNVENMSFAIPVNEVQKIVKDLETKGKIDYPDVGVKMKNIASLNSFERQAVKLPGKVKNGVVVDQVDNNGLADQSGLKKGDVITELDGKLLEDDLRFRQIIFSHKDDLKSITAKIYRDGKEKEINIKLK.

A compositionally biased stretch (basic residues) spans 1-20; the sequence is MDIGKKHVIPKSQYRRKRRE. The disordered stretch occupies residues 1 to 390; the sequence is MDIGKKHVIP…ATSKLNKGRA (390 aa). Basic and acidic residues-rich tracts occupy residues 21–64 and 71–108; these read FFHN…ERFK and LEQR…DVSK. The span at 126–137 shows a compositional bias: polar residues; sequence YEQNSEATLSTK. Positions 138–186 are enriched in basic and acidic residues; that stretch reads STDKVESTEMRKLSSDKNKVGHEEQHVLSKPSEHDKETRIDSESSRTDS. Residues 247–262 show a composition bias toward polar residues; it reads QQSQNEQTKTYTYGDS. Basic and acidic residues-rich tracts occupy residues 264–296 and 310–330; these read QNDK…HIVD and KTDD…HKQN. Over residues 331 to 347 the composition is skewed to polar residues; sequence ADSSETVGYQSQSTASH. The span at 348 to 364 shows a compositional bias: basic and acidic residues; that stretch reads RSTEKRNISINDHDKLN. Residues 365-390 are compositionally biased toward polar residues; sequence GQKTNTKTSANNNQKKATSKLNKGRA. The helical transmembrane segment at 410-430 threads the bilayer; it reads LVILMGIIILIVILNAIFNNV. Active-site charge relay system residues include H504, D534, and S619. A PDZ domain is found at 680-733; the sequence is IASLNSFERQAVKLPGKVKNGVVVDQVDNNGLADQSGLKKGDVITELDGKLLED.

This sequence belongs to the peptidase S1C family.

The protein resides in the cell membrane. The sequence is that of Serine protease HtrA-like from Staphylococcus aureus (strain COL).